Here is a 79-residue protein sequence, read N- to C-terminus: Sec-independent protein translocase protein TatA (79 aa).

Residues 1-21 form a helical membrane-spanning segment; that stretch reads MGGISIWQLLIIALIVVLLFG. Residues 43–79 are disordered; it reads MSSEEDKKALEDTEAAKTAQTTQQATEKKPESNKEQA. Basic and acidic residues predominate over residues 46 to 57; that stretch reads EEDKKALEDTEA. The segment covering 58-67 has biased composition (low complexity); sequence AKTAQTTQQA. A compositionally biased stretch (basic and acidic residues) spans 68-79; that stretch reads TEKKPESNKEQA.

The protein belongs to the TatA/E family. In terms of assembly, the Tat system comprises two distinct complexes: a TatABC complex, containing multiple copies of TatA, TatB and TatC subunits, and a separate TatA complex, containing only TatA subunits. Substrates initially bind to the TatABC complex, which probably triggers association of the separate TatA complex to form the active translocon.

The protein localises to the cell inner membrane. Part of the twin-arginine translocation (Tat) system that transports large folded proteins containing a characteristic twin-arginine motif in their signal peptide across membranes. TatA could form the protein-conducting channel of the Tat system. The polypeptide is Sec-independent protein translocase protein TatA (Shewanella putrefaciens (strain CN-32 / ATCC BAA-453)).